Reading from the N-terminus, the 147-residue chain is Myoglobin (147 aa).

Residues 2–141 (ADHDLVLKCW…VIGDIDGYYK (140 aa)) enclose the Globin domain. His60 serves as a coordination point for nitrite. His60 lines the O2 pocket. His89 lines the heme b pocket.

It belongs to the globin family. In terms of assembly, monomeric.

Its subcellular location is the cytoplasm. It is found in the sarcoplasm. The catalysed reaction is Fe(III)-heme b-[protein] + nitric oxide + H2O = Fe(II)-heme b-[protein] + nitrite + 2 H(+). The enzyme catalyses H2O2 + AH2 = A + 2 H2O. Its function is as follows. Monomeric heme protein which primary function is to store oxygen and facilitate its diffusion within muscle tissues. Reversibly binds oxygen through a pentacoordinated heme iron and enables its timely and efficient release as needed during periods of heightened demand. Depending on the oxidative conditions of tissues and cells, and in addition to its ability to bind oxygen, it also has a nitrite reductase activity whereby it regulates the production of bioactive nitric oxide. Under stress conditions, like hypoxia and anoxia, it also protects cells against reactive oxygen species thanks to its pseudoperoxidase activity. In Danio rerio (Zebrafish), this protein is Myoglobin (mb).